We begin with the raw amino-acid sequence, 217 residues long: 3,4-dihydroxy-2-butanone 4-phosphate synthase (217 aa).

D-ribulose 5-phosphate-binding positions include 37–38 (RE), Asp-42, 150–154 (RRGHT), and Glu-174. Glu-38 provides a ligand contact to Mg(2+). His-153 contributes to the Mg(2+) binding site.

Belongs to the DHBP synthase family. Homodimer. It depends on Mg(2+) as a cofactor. Requires Mn(2+) as cofactor.

It carries out the reaction D-ribulose 5-phosphate = (2S)-2-hydroxy-3-oxobutyl phosphate + formate + H(+). The protein operates within cofactor biosynthesis; riboflavin biosynthesis; 2-hydroxy-3-oxobutyl phosphate from D-ribulose 5-phosphate: step 1/1. Catalyzes the conversion of D-ribulose 5-phosphate to formate and 3,4-dihydroxy-2-butanone 4-phosphate. The chain is 3,4-dihydroxy-2-butanone 4-phosphate synthase from Shewanella baltica (strain OS155 / ATCC BAA-1091).